A 421-amino-acid polypeptide reads, in one-letter code: Testin (421 aa).

A PET domain is found at 92–199 (MILTNPVAAK…GDVKLPYEMG (108 aa)). Residues 133–164 (EKQPVAGSEGAQYRKKQLAKQLPAHDQDPSKC) are disordered. The span at 155 to 164 (PAHDQDPSKC) shows a compositional bias: basic and acidic residues. 3 LIM zinc-binding domains span residues 234 to 297 (YFCY…CDSE), 299 to 359 (PRCA…NHAV), and 362 to 421 (QGCH…KMMS).

This sequence belongs to the prickle / espinas / testin family. In terms of assembly, interacts via LIM domain 1 with ZYX. Interacts (via LIM domain 3) with ENAH and VASP. Interacts with ALKBH4, talin, actin, alpha-actinin, GRIP1 and PXN. Interacts (via LIM domain 2) with ACTL7A (via N-terminus). Heterodimer with ACTL7A; the heterodimer interacts with ENAH to form a heterotrimer.

The protein localises to the cytoplasm. The protein resides in the cell junction. It is found in the focal adhesion. In terms of biological role, scaffold protein that may play a role in cell adhesion, cell spreading and in the reorganization of the actin cytoskeleton. Plays a role in the regulation of cell proliferation. May act as a tumor suppressor. The protein is Testin (TES) of Oryctolagus cuniculus (Rabbit).